The following is a 236-amino-acid chain: Biosynthetic peptidoglycan transglycosylase (236 aa).

Residues 20–40 (GLVVAAVLALIPTMLTFLYLP) traverse the membrane as a helical segment.

The protein belongs to the glycosyltransferase 51 family.

The protein localises to the cell inner membrane. The enzyme catalyses [GlcNAc-(1-&gt;4)-Mur2Ac(oyl-L-Ala-gamma-D-Glu-L-Lys-D-Ala-D-Ala)](n)-di-trans,octa-cis-undecaprenyl diphosphate + beta-D-GlcNAc-(1-&gt;4)-Mur2Ac(oyl-L-Ala-gamma-D-Glu-L-Lys-D-Ala-D-Ala)-di-trans,octa-cis-undecaprenyl diphosphate = [GlcNAc-(1-&gt;4)-Mur2Ac(oyl-L-Ala-gamma-D-Glu-L-Lys-D-Ala-D-Ala)](n+1)-di-trans,octa-cis-undecaprenyl diphosphate + di-trans,octa-cis-undecaprenyl diphosphate + H(+). It participates in cell wall biogenesis; peptidoglycan biosynthesis. Functionally, peptidoglycan polymerase that catalyzes glycan chain elongation from lipid-linked precursors. This chain is Biosynthetic peptidoglycan transglycosylase, found in Mesorhizobium japonicum (strain LMG 29417 / CECT 9101 / MAFF 303099) (Mesorhizobium loti (strain MAFF 303099)).